The sequence spans 351 residues: Adenine deaminase (351 aa).

Residues His20, His22, and His200 each contribute to the Zn(2+) site. Catalysis depends on Glu203, which acts as the Proton donor. Asp281 serves as a coordination point for Zn(2+). Asp282 contributes to the substrate binding site.

This sequence belongs to the metallo-dependent hydrolases superfamily. Adenosine and AMP deaminases family. Adenine deaminase type 2 subfamily. It depends on Zn(2+) as a cofactor.

It carries out the reaction adenine + H2O + H(+) = hypoxanthine + NH4(+). Its function is as follows. Catalyzes the hydrolytic deamination of adenine to hypoxanthine. Plays an important role in the purine salvage pathway and in nitrogen catabolism. This is Adenine deaminase from Cupriavidus pinatubonensis (strain JMP 134 / LMG 1197) (Cupriavidus necator (strain JMP 134)).